The chain runs to 507 residues: ATP synthase subunit alpha, mitochondrial (507 aa).

ATP is bound at residue 171–178 (GDRQTGKT).

Belongs to the ATPase alpha/beta chains family. As to quaternary structure, F-type ATPases have 2 components, CF(1) - the catalytic core - and CF(0) - the membrane proton channel. CF(1) has five subunits: alpha(3), beta(3), gamma(1), delta(1), epsilon(1). CF(0) has three main subunits: a, b and c.

It localises to the mitochondrion. The protein localises to the mitochondrion inner membrane. In terms of biological role, mitochondrial membrane ATP synthase (F(1)F(0) ATP synthase or Complex V) produces ATP from ADP in the presence of a proton gradient across the membrane which is generated by electron transport complexes of the respiratory chain. F-type ATPases consist of two structural domains, F(1) - containing the extramembraneous catalytic core, and F(0) - containing the membrane proton channel, linked together by a central stalk and a peripheral stalk. During catalysis, ATP synthesis in the catalytic domain of F(1) is coupled via a rotary mechanism of the central stalk subunits to proton translocation. Subunits alpha and beta form the catalytic core in F(1). Rotation of the central stalk against the surrounding alpha(3)beta(3) subunits leads to hydrolysis of ATP in three separate catalytic sites on the beta subunits. Subunit alpha does not bear the catalytic high-affinity ATP-binding sites. In Brassica napus (Rape), this protein is ATP synthase subunit alpha, mitochondrial (ATPA).